A 55-amino-acid polypeptide reads, in one-letter code: ATP synthase protein 8 (55 aa).

The chain crosses the membrane as a helical span at residues 8-28 (WWIVNFSLIWASVLIVISLLL). A disordered region spans residues 34–55 (NSAGQSSSSLTLNKTTTNWQWL). The segment covering 39-55 (SSSSLTLNKTTTNWQWL) has biased composition (low complexity).

It belongs to the ATPase protein 8 family. As to quaternary structure, F-type ATPases have 2 components, CF(1) - the catalytic core - and CF(0) - the membrane proton channel.

It is found in the mitochondrion membrane. Mitochondrial membrane ATP synthase (F(1)F(0) ATP synthase or Complex V) produces ATP from ADP in the presence of a proton gradient across the membrane which is generated by electron transport complexes of the respiratory chain. F-type ATPases consist of two structural domains, F(1) - containing the extramembraneous catalytic core and F(0) - containing the membrane proton channel, linked together by a central stalk and a peripheral stalk. During catalysis, ATP synthesis in the catalytic domain of F(1) is coupled via a rotary mechanism of the central stalk subunits to proton translocation. Part of the complex F(0) domain. Minor subunit located with subunit a in the membrane. This is ATP synthase protein 8 (MT-ATP8) from Strongylocentrotus purpuratus (Purple sea urchin).